Here is a 748-residue protein sequence, read N- to C-terminus: Probable transcriptional regulator SLK1 (748 aa).

2 disordered regions span residues 67–93 (QHLP…RENN) and 138–163 (QQRL…QQQQ). The span at 71–81 (QQQQQQLLQQQ) shows a compositional bias: low complexity. The dimerization stretch occupies residues 204 to 451 (PAENCITYWR…EQKIGPIEGL (248 aa)). Residues 213-227 (RKFVAEYFSPRAKQR) carry the Nuclear localization signal motif. Polar residues predominate over residues 572 to 587 (NAMNNPNSNTGKQEGF). Disordered stretches follow at residues 572–653 (NAMN…GNTP) and 667–712 (ENGG…NNSF). Residues 588-606 (SSQNPTPNSNQSPSSSSQQ) show a composition bias toward low complexity. The span at 615–653 (FPNSPQMQQQQRTMNGPTNILPQNHPHQLQSPHSHGNTP) shows a compositional bias: polar residues. Residues 667 to 686 (ENGGSVQQQQAFSGQSGSNS) show a composition bias toward low complexity. A compositionally biased stretch (polar residues) spans 687 to 699 (NAERNTTASTSNI).

Belongs to the adn1/SEU family. As to quaternary structure, forms corepressor complexes with LUH; LUH is the transcription repressor subunit and SLK1 the specific DNA-binding adapters. Expressed in young flower meristems, ovules and the carpel margin meristem.

It localises to the nucleus. Its function is as follows. Probable transcription regulator that functions in the development of the carpel margin meristem similarly to SEUSS (SEU). In association with SEU, supports organ development from meristematic regions by facilitating auxin response and thus organ initiation, and by sustaining meristematic potential through the maintenance of PHABULOSA expression. DNA-binding adapter subunit of the SEU-SLK1 transcriptional corepressor of abiotic stress (e.g. salt and osmotic stress) response genes. The chain is Probable transcriptional regulator SLK1 (SLK1) from Arabidopsis thaliana (Mouse-ear cress).